The following is a 149-amino-acid chain: Flagellar assembly factor FliW (149 aa).

Belongs to the FliW family. As to quaternary structure, interacts with translational regulator CsrA and flagellin(s).

It localises to the cytoplasm. Its function is as follows. Acts as an anti-CsrA protein, binds CsrA and prevents it from repressing translation of its target genes, one of which is flagellin. Binds to flagellin and participates in the assembly of the flagellum. The polypeptide is Flagellar assembly factor FliW (Thermotoga sp. (strain RQ2)).